The chain runs to 501 residues: Glycerol kinase (501 aa).

Threonine 17 is a binding site for ADP. ATP contacts are provided by threonine 17, threonine 18, and serine 19. Threonine 17 contacts sn-glycerol 3-phosphate. An ADP-binding site is contributed by arginine 21. Positions 87, 88, 139, and 243 each coordinate sn-glycerol 3-phosphate. Glycerol is bound by residues arginine 87, glutamate 88, tyrosine 139, aspartate 243, and glutamine 244. Threonine 265 and glycine 308 together coordinate ADP. ATP-binding residues include threonine 265, glycine 308, glutamine 312, and glycine 409. Residues glycine 409 and asparagine 413 each coordinate ADP.

This sequence belongs to the FGGY kinase family.

The enzyme catalyses glycerol + ATP = sn-glycerol 3-phosphate + ADP + H(+). It functions in the pathway polyol metabolism; glycerol degradation via glycerol kinase pathway; sn-glycerol 3-phosphate from glycerol: step 1/1. Its activity is regulated as follows. Inhibited by fructose 1,6-bisphosphate (FBP). Its function is as follows. Key enzyme in the regulation of glycerol uptake and metabolism. Catalyzes the phosphorylation of glycerol to yield sn-glycerol 3-phosphate. The protein is Glycerol kinase of Pseudomonas savastanoi pv. phaseolicola (strain 1448A / Race 6) (Pseudomonas syringae pv. phaseolicola (strain 1448A / Race 6)).